A 257-amino-acid polypeptide reads, in one-letter code: Large ribosomal subunit protein uL3 (257 aa).

An N5-methylglutamine modification is found at Q151. The interval 218–257 is disordered; the sequence is YPASIKSAANTNTAPADAPVETPAEEAVVDTAATDGAQES. Low complexity predominate over residues 225 to 236; the sequence is AANTNTAPADAP.

The protein belongs to the universal ribosomal protein uL3 family. Part of the 50S ribosomal subunit. Forms a cluster with proteins L14 and L19. Post-translationally, methylated by PrmB.

In terms of biological role, one of the primary rRNA binding proteins, it binds directly near the 3'-end of the 23S rRNA, where it nucleates assembly of the 50S subunit. This is Large ribosomal subunit protein uL3 from Sphingopyxis alaskensis (strain DSM 13593 / LMG 18877 / RB2256) (Sphingomonas alaskensis).